The following is a 549-amino-acid chain: Undecaprenyl phosphate-alpha-4-amino-4-deoxy-L-arabinose arabinosyl transferase (549 aa).

A run of 12 helical transmembrane segments spans residues 9-29 (LLLI…GLWI), 80-100 (LFGV…LAYL), 112-132 (SLAC…SGYA), 133-153 (NLDP…WHAL), 176-196 (FLTK…PYML), 204-224 (LLGY…PWAL), 256-276 (PWWF…GLLP), 288-308 (QAPV…FSLS), 312-332 (LPTY…HALV), 346-366 (NGLL…YLQL), 376-396 (FELF…LAQW), and 402-422 (AWAA…AAMP).

This sequence belongs to the glycosyltransferase 83 family.

It is found in the cell inner membrane. It catalyses the reaction 4-amino-4-deoxy-alpha-L-arabinopyranosyl di-trans,octa-cis-undecaprenyl phosphate + lipid IVA = lipid IIA + di-trans,octa-cis-undecaprenyl phosphate.. The protein operates within lipopolysaccharide metabolism; 4-amino-4-deoxy-beta-L-arabinose-lipid A biosynthesis. Catalyzes the transfer of the L-Ara4N moiety of the glycolipid undecaprenyl phosphate-alpha-L-Ara4N to lipid A. The modified arabinose is attached to lipid A and is required for resistance to polymyxin and cationic antimicrobial peptides. The sequence is that of Undecaprenyl phosphate-alpha-4-amino-4-deoxy-L-arabinose arabinosyl transferase from Pseudomonas aeruginosa (strain LESB58).